The chain runs to 533 residues: Probable DNA ligase (533 aa).

Position 211 (Glu211) interacts with ATP. The N6-AMP-lysine intermediate role is filled by Lys213. Positions 218, 233, 262, 302, 374, and 380 each coordinate ATP. Residues 512-533 form a disordered region; the sequence is LAGEAAEKGQAEGGGEELEDDG.

Belongs to the ATP-dependent DNA ligase family. Requires Mg(2+) as cofactor.

The enzyme catalyses ATP + (deoxyribonucleotide)n-3'-hydroxyl + 5'-phospho-(deoxyribonucleotide)m = (deoxyribonucleotide)n+m + AMP + diphosphate.. Its function is as follows. DNA ligase that seals nicks in double-stranded DNA during DNA replication, DNA recombination and DNA repair. This Sorangium cellulosum (strain So ce56) (Polyangium cellulosum (strain So ce56)) protein is Probable DNA ligase.